We begin with the raw amino-acid sequence, 199 residues long: NAD(P)H dehydrogenase (quinone) (199 aa).

The Flavodoxin-like domain occupies 4 to 190 (VLVLYYSSYG…EGARHQGELV (187 aa)). FMN contacts are provided by residues 10 to 15 (SSYGHI) and 78 to 80 (TRY). NAD(+) is bound at residue tyrosine 12. Tryptophan 98 lines the substrate pocket. FMN is bound by residues 113 to 119 (STATQHG) and histidine 134.

This sequence belongs to the WrbA family. FMN is required as a cofactor.

It catalyses the reaction a quinone + NADH + H(+) = a quinol + NAD(+). It carries out the reaction a quinone + NADPH + H(+) = a quinol + NADP(+). The protein is NAD(P)H dehydrogenase (quinone) of Paraburkholderia phymatum (strain DSM 17167 / CIP 108236 / LMG 21445 / STM815) (Burkholderia phymatum).